The primary structure comprises 923 residues: Calmodulin-binding transcription activator 5 (923 aa).

Residues I25–A151 constitute a DNA-binding region (CG-1). The interval V272–V372 is transcription activation. One copy of the ANK repeat lies at Q611–L640. IQ domains are found at residues N757–R786, M799–V828, and L875–E904. The tract at residues W824–L846 is calmodulin-binding. A coiled-coil region spans residues R887–E914.

It belongs to the CAMTA family. As to expression, expressed in roots, stems, leaves, pollen, top of sepals and siliques.

Its subcellular location is the nucleus. Transcription activator. Binds to the DNA consensus sequence 5'-[ACG]CGCG[GTC]-3'. Regulates transcriptional activity in response to calcium signals. Binds calmodulin in a calcium-dependent manner. Involved in response to cold. Contributes together with CAMTA3 to the positive regulation of the cold-induced expression of DREB1A/CBF3, DREB1B/CBF1 and DREB1C/CBF2. This is Calmodulin-binding transcription activator 5 from Arabidopsis thaliana (Mouse-ear cress).